A 192-amino-acid polypeptide reads, in one-letter code: HTH-type transcriptional regulator Hpr (192 aa).

Residues 12–156 (SIIFSHKFAQ…LLSIVRHVYG (145 aa)) form the HTH marR-type domain. The segment at residues 62 to 85 (ISDIAKFGVMHVSTAFNFSKKLEE) is a DNA-binding region (H-T-H motif).

Homodimer.

Negative regulator of protease production and sporulation. The sequence is that of HTH-type transcriptional regulator Hpr from Halalkalibacterium halodurans (strain ATCC BAA-125 / DSM 18197 / FERM 7344 / JCM 9153 / C-125) (Bacillus halodurans).